Consider the following 430-residue polypeptide: Asparagine--tRNA ligase (430 aa).

The protein belongs to the class-II aminoacyl-tRNA synthetase family. In terms of assembly, homodimer.

The protein resides in the cytoplasm. The enzyme catalyses tRNA(Asn) + L-asparagine + ATP = L-asparaginyl-tRNA(Asn) + AMP + diphosphate + H(+). The sequence is that of Asparagine--tRNA ligase from Listeria monocytogenes serovar 1/2a (strain ATCC BAA-679 / EGD-e).